The chain runs to 177 residues: dCTP deaminase, dUMP-forming (177 aa).

DCTP-binding positions include 95 to 100 (RSSLGR), Asp-112, 120 to 122 (TLE), Gln-141, Tyr-155, and Gln-162. Glu-122 functions as the Proton donor/acceptor in the catalytic mechanism.

The protein belongs to the dCTP deaminase family. As to quaternary structure, homotrimer.

It catalyses the reaction dCTP + 2 H2O = dUMP + NH4(+) + diphosphate. Its pathway is pyrimidine metabolism; dUMP biosynthesis; dUMP from dCTP: step 1/1. In terms of biological role, bifunctional enzyme that catalyzes both the deamination of dCTP to dUTP and the hydrolysis of dUTP to dUMP without releasing the toxic dUTP intermediate. This is dCTP deaminase, dUMP-forming from Hydrogenobaculum sp. (strain Y04AAS1).